The primary structure comprises 273 residues: 2,3,4,5-tetrahydropyridine-2,6-dicarboxylate N-succinyltransferase (273 aa).

The substrate site is built by arginine 104 and aspartate 141.

The protein belongs to the transferase hexapeptide repeat family. As to quaternary structure, homotrimer.

Its subcellular location is the cytoplasm. It catalyses the reaction (S)-2,3,4,5-tetrahydrodipicolinate + succinyl-CoA + H2O = (S)-2-succinylamino-6-oxoheptanedioate + CoA. Its pathway is amino-acid biosynthesis; L-lysine biosynthesis via DAP pathway; LL-2,6-diaminopimelate from (S)-tetrahydrodipicolinate (succinylase route): step 1/3. The chain is 2,3,4,5-tetrahydropyridine-2,6-dicarboxylate N-succinyltransferase from Thioalkalivibrio sulfidiphilus (strain HL-EbGR7).